The chain runs to 315 residues: Methionyl-tRNA formyltransferase (315 aa).

(6S)-5,6,7,8-tetrahydrofolate is bound at residue 107-110 (SLLP).

Belongs to the Fmt family.

It carries out the reaction L-methionyl-tRNA(fMet) + (6R)-10-formyltetrahydrofolate = N-formyl-L-methionyl-tRNA(fMet) + (6S)-5,6,7,8-tetrahydrofolate + H(+). Functionally, attaches a formyl group to the free amino group of methionyl-tRNA(fMet). The formyl group appears to play a dual role in the initiator identity of N-formylmethionyl-tRNA by promoting its recognition by IF2 and preventing the misappropriation of this tRNA by the elongation apparatus. The sequence is that of Methionyl-tRNA formyltransferase from Borrelia garinii subsp. bavariensis (strain ATCC BAA-2496 / DSM 23469 / PBi) (Borreliella bavariensis).